Consider the following 223-residue polypeptide: Ribose-5-phosphate isomerase A (223 aa).

Substrate-binding positions include 32-35 (TGST), 85-88 (DGAD), and 98-101 (KGGG). E107 functions as the Proton acceptor in the catalytic mechanism. K125 lines the substrate pocket.

It belongs to the ribose 5-phosphate isomerase family. In terms of assembly, homodimer.

The catalysed reaction is aldehydo-D-ribose 5-phosphate = D-ribulose 5-phosphate. Its pathway is carbohydrate degradation; pentose phosphate pathway; D-ribose 5-phosphate from D-ribulose 5-phosphate (non-oxidative stage): step 1/1. In terms of biological role, catalyzes the reversible conversion of ribose-5-phosphate to ribulose 5-phosphate. In Pseudomonas syringae pv. tomato (strain ATCC BAA-871 / DC3000), this protein is Ribose-5-phosphate isomerase A.